A 253-amino-acid polypeptide reads, in one-letter code: MSGSRKFFVGGNWKMNGSRDDNDKLLKLLSEAHFDDNTEVLIAPPSVFLHEIRKSLKKEIHVAAQNCYKVSKGAFTGEISPAMIRDIGCDWVILGHSERRNIFGESDELIAEKVQHALAEGLSVIACIGETLSERESNKTEEVCVRQLKAIANKIKSADEWKRVVVAYEPVWAIGTGKVATPQQAQEVHNFLRKWFKTNAPNGVDEKIRIIYGGSVTAANCKELAQQHDVDGFLVGGASLKPEFTEICKARQR.

2 residues coordinate substrate: Asn-12 and Lys-14. The Electrophile role is filled by His-96. Glu-169 acts as the Proton acceptor in catalysis.

It belongs to the triosephosphate isomerase family. Homodimer.

It localises to the cytoplasm. The enzyme catalyses D-glyceraldehyde 3-phosphate = dihydroxyacetone phosphate. It participates in carbohydrate biosynthesis; gluconeogenesis. The protein operates within carbohydrate degradation; glycolysis; D-glyceraldehyde 3-phosphate from glycerone phosphate: step 1/1. In terms of biological role, antigen to the host M.1 monoclonal antibody. The chain is Triosephosphate isomerase (TPI) from Schistosoma mansoni (Blood fluke).